We begin with the raw amino-acid sequence, 379 residues long: MNQSLGVLRLTRGVIALALASVASGCSSTGADRTAATPAAANPAATEPVKWECPAGYEVKEGLNVDFPHKGMKRAFIVYPAKNVSGPAPVWVPMTGSVESTNDNLTVARSGANSILADHGYTVIAPVRACANQDPNIRGERCNGPGSNGWNWNPWFEGRAADPSGEHWKNDEGPDSSFFVAMVQCVGTKYKLDARRLFLGGISSGGTMTNRALLFRSNFWAGGLPISGEWYVTSDDGTPLSFDDARAAVAAAPTKIHQGRVGPYPLPAKVGPLIVMTVWGGEKDLWNCTRPDGSRFLCADYRPSTQAGSNFFSAQPDVVHVACSSTHGHMWPQLNTQEFNRWALDTLASHPKGSDPRSFKLTQPPEGYTCHVGPFTGLY.

The first 23 residues, Met-1–Ala-23, serve as a signal peptide directing secretion. Active-site charge relay system residues include Ser-203 and Ser-309.

Belongs to the peptidase S9A family. As to quaternary structure, monomer.

It catalyses the reaction nonane-4,6-dione + H2O = pentan-2-one + butanoate + H(+). Catalyzes the hydrolysis of 4,6-nonanedione, a beta-diketone compound. Also mediates hydrolysis of oxidized polyvinyl alcohol (PVA) in the second step in the degradation of polyvinyl alcohol. Not active toward the monoketone structure. The polypeptide is Oxidized polyvinyl alcohol hydrolase (pvaB) (Pseudomonas sp).